Here is a 240-residue protein sequence, read N- to C-terminus: MEKISIQLSKLRKNFGTVEVLKDVDIAIPEGQFVALVGESGCGKSTLLRLISHLERPTSGQLLIDGKERRKINPSVRYLFQEARLLPWRSVLDNVRLGAKDRDKKTARESLESVNLLDKENEWPEILSGGQCQRVSLARALAGKPKILLLDEPLGALDALTRVQMQKLIESLWLEQKFTVLLVTHDVSEAVYLADRVIALEKGQIGLDREIPLPRPRVKDRHFACFENEILNFIMKNYYI.

An ABC transporter domain is found at 6-227; sequence IQLSKLRKNF…VKDRHFACFE (222 aa). 38 to 45 is an ATP binding site; it reads GESGCGKS.

It belongs to the ABC transporter superfamily. Aliphatic sulfonates importer (TC 3.A.1.17.2) family. In terms of assembly, the complex is composed of two ATP-binding proteins (SsuB), two transmembrane proteins (SsuC) and a solute-binding protein (SsuA).

It is found in the cell inner membrane. It catalyses the reaction ATP + H2O + aliphatic sulfonate-[sulfonate-binding protein]Side 1 = ADP + phosphate + aliphatic sulfonateSide 2 + [sulfonate-binding protein]Side 1.. Functionally, part of the ABC transporter complex SsuABC involved in aliphatic sulfonates import. Responsible for energy coupling to the transport system. The protein is Aliphatic sulfonates import ATP-binding protein SsuB of Zymomonas mobilis subsp. mobilis (strain ATCC 31821 / ZM4 / CP4).